The chain runs to 251 residues: Putative imidazole glycerol phosphate synthase subunit hisF2 (251 aa).

Asp130 is an active-site residue.

Belongs to the HisA/HisF family. In terms of assembly, heterodimer of HisH and HisF.

The protein resides in the cytoplasm. It catalyses the reaction 5-[(5-phospho-1-deoxy-D-ribulos-1-ylimino)methylamino]-1-(5-phospho-beta-D-ribosyl)imidazole-4-carboxamide + L-glutamine = D-erythro-1-(imidazol-4-yl)glycerol 3-phosphate + 5-amino-1-(5-phospho-beta-D-ribosyl)imidazole-4-carboxamide + L-glutamate + H(+). The protein operates within amino-acid biosynthesis; L-histidine biosynthesis; L-histidine from 5-phospho-alpha-D-ribose 1-diphosphate: step 5/9. Its function is as follows. IGPS catalyzes the conversion of PRFAR and glutamine to IGP, AICAR and glutamate. The HisF subunit catalyzes the cyclization activity that produces IGP and AICAR from PRFAR using the ammonia provided by the HisH subunit. The polypeptide is Putative imidazole glycerol phosphate synthase subunit hisF2 (hisF2) (Pseudomonas aeruginosa (strain ATCC 15692 / DSM 22644 / CIP 104116 / JCM 14847 / LMG 12228 / 1C / PRS 101 / PAO1)).